The primary structure comprises 404 residues: Zinc finger protein zfs1 (404 aa).

The span at 134–149 shows a compositional bias: polar residues; that stretch reads SYLHSGSSPHGNTSNH. 2 disordered regions span residues 134–168 and 259–322; these read SYLHSGSSPHGNTSNHPSPISSLESLPSRSSTGSG and SNAS…APNG. The span at 150-168 shows a compositional bias: low complexity; the sequence is PSPISSLESLPSRSSTGSG. The segment covering 259-283 has biased composition (polar residues); it reads SNASIRNAPSNLSKQFSPSGNSPLT. Positions 304-317 are enriched in low complexity; the sequence is GSASHPHGSGSSNG. 2 consecutive C3H1-type zinc fingers follow at residues 326–354 and 364–392; these read LYKTEPCKNWQISGTCRYGSKCQFAHGNQ and KYKSERCRSFMMYGYCPYGLRCCFLHDES.

In terms of assembly, interacts with moc3.

The protein resides in the cytoplasm. It is found in the nucleus. Binds to specific AU-rich elements (ARE) in the 3'-untranslated region of target mRNAs and promotes their degradation. Binds to ARE present in the arz1 mRNA and stimulates the rate of arz1 mRNA decay. Required for coordination of septum formation with exit from mitosis. Involved in the mating response pathway. Induces sexual development and ascus formation. The polypeptide is Zinc finger protein zfs1 (zfs1) (Schizosaccharomyces pombe (strain 972 / ATCC 24843) (Fission yeast)).